Here is a 381-residue protein sequence, read N- to C-terminus: Probable serine/threonine-protein kinase PBL25 (381 aa).

Residue C3 is the site of S-palmitoyl cysteine attachment. The disordered stretch occupies residues 16 to 41 (GSSMPAPYKQPNSPKRTTGEVVAKNA). Phosphothreonine is present on T54. In terms of domain architecture, Protein kinase spans 65-342 (FRQECLIGEG…SDVITALSFL (278 aa)). Residues 71–79 (IGEGGFGRV) and K94 contribute to the ATP site. Residue Y139 is modified to Phosphotyrosine. D192 functions as the Proton acceptor in the catalytic mechanism. Phosphoserine occurs at positions 196 and 226. T232 carries the post-translational modification Phosphothreonine. Y240 carries the post-translational modification Phosphotyrosine. The disordered stretch occupies residues 347-381 (NSSNTGSNHLQQNRSNKYQDAVQWDSSPRYANSQM). Over residues 355–381 (HLQQNRSNKYQDAVQWDSSPRYANSQM) the composition is skewed to polar residues.

It belongs to the protein kinase superfamily. Ser/Thr protein kinase family.

The protein localises to the cell membrane. It catalyses the reaction L-seryl-[protein] + ATP = O-phospho-L-seryl-[protein] + ADP + H(+). The catalysed reaction is L-threonyl-[protein] + ATP = O-phospho-L-threonyl-[protein] + ADP + H(+). In terms of biological role, may be involved in plant defense signaling. In Arabidopsis thaliana (Mouse-ear cress), this protein is Probable serine/threonine-protein kinase PBL25.